The following is a 394-amino-acid chain: NAD(P)H-quinone oxidoreductase subunit H (394 aa).

It belongs to the complex I 49 kDa subunit family. As to quaternary structure, NDH-1 can be composed of about 15 different subunits; different subcomplexes with different compositions have been identified which probably have different functions.

It is found in the cellular thylakoid membrane. The enzyme catalyses a plastoquinone + NADH + (n+1) H(+)(in) = a plastoquinol + NAD(+) + n H(+)(out). The catalysed reaction is a plastoquinone + NADPH + (n+1) H(+)(in) = a plastoquinol + NADP(+) + n H(+)(out). Functionally, NDH-1 shuttles electrons from an unknown electron donor, via FMN and iron-sulfur (Fe-S) centers, to quinones in the respiratory and/or the photosynthetic chain. The immediate electron acceptor for the enzyme in this species is believed to be plastoquinone. Couples the redox reaction to proton translocation, and thus conserves the redox energy in a proton gradient. Cyanobacterial NDH-1 also plays a role in inorganic carbon-concentration. The sequence is that of NAD(P)H-quinone oxidoreductase subunit H from Acaryochloris marina (strain MBIC 11017).